Reading from the N-terminus, the 273-residue chain is Large ribosomal subunit protein uL2 (273 aa).

Disordered stretches follow at residues 35–54 (DKKDKSGGRNNNGRITTRHI) and 222–273 (GMAM…RRNK). Residues 229–239 (DHPHGGGEGRN) are compositionally biased toward basic and acidic residues. Residues 253–273 (KGFKTRKNKRTDKYIVRRRNK) show a composition bias toward basic residues.

It belongs to the universal ribosomal protein uL2 family. In terms of assembly, part of the 50S ribosomal subunit. Forms a bridge to the 30S subunit in the 70S ribosome.

In terms of biological role, one of the primary rRNA binding proteins. Required for association of the 30S and 50S subunits to form the 70S ribosome, for tRNA binding and peptide bond formation. It has been suggested to have peptidyltransferase activity; this is somewhat controversial. Makes several contacts with the 16S rRNA in the 70S ribosome. The protein is Large ribosomal subunit protein uL2 of Aeromonas hydrophila subsp. hydrophila (strain ATCC 7966 / DSM 30187 / BCRC 13018 / CCUG 14551 / JCM 1027 / KCTC 2358 / NCIMB 9240 / NCTC 8049).